A 1140-amino-acid chain; its full sequence is MGEIYSPSQSKGFNQPYGYPMNCNLSRVFMEMTEEDRKCLEERKYWCFLLSSITTFCASMILVVIWRVVTHLCCQRREKEFVEPIPAPEAVQINMNGSKHAPSETDPFLKQQEEKHLGWMTEAKDWAGELISGQSLTGRFLVLLVFILSIGSLIIYFYDASFQNFQVETCIPWQDSPSQQIDLGFNIFFLVYFFIRFIAASDKVWFLLEMYSWIDFFTIPPSFVAIYLQRNWLGFRFLRALRLMTVPDILQYLNILKTSSSIRLTQLVTIFVAVCLTGAGLVHLLENSGDFFKGFINPHRITYADSVYFVLVTMSTVGYGDIYCTTLCGRLFMIFFILFGLAMFASYVPEIADLIGNRQKYGGEYKGEHGKKHIVVCGHITYDSVSHFLQDFLHEDRDDVDVEVVFLHRVVPDLELEGLFKRHFTKVEFFTGTVMDSLDLSRVKIGDADACLVLANKYSTNPDAEDAANIMRVISIKNYSSDIRVIVQLMQYHNKAYLLNIPSWDWKRGDDVICLAELKLGFIAQSCLAPGFSTMMANLFAMRSFKTSQTTPDWLNLYLCGAGMEMYTDTLSHSFVGMTFPEAVDLLFNRLGLLLLAIELKDEENKECNIAINPGPHIVIQPQTQGFFIAQSADEVKRAFFWCKQCHDDIKDVSLIKKCKCKNLALFRRNTKHSTAARARATDVLQQFQPQAPAGPMGHLGQQVQLRMINQQSSTSDTHLNTKSLRFAYEIKKLMPSSGGRRNSMSIPPDGRGVDFSKDFEQQFQDMKYDSTGMFHWCPSRNLEDCVLERHQAAMTVLNGHVVVCLFADQDSPLIGLRNFIMPLRSSNFHYHELKHVVIVGDLEYLRKEWKTLYNLPKISILNGSPLSRADLRAVNINLCDMCVIISARVPNTEDTTLADKEAILASLNIKAMQFDDTLGFFPMRHQTGDRSPLGSPISMQKKGAKFGTNVPMITELVNDSNVQFLDQDDDDDPDTELYLTQPFACGTAFAISVLDSLMSTTYFNDSALTLIRTLVTGGATPELELILAEGAGLRGGYSTPETLSNRDRCRIAQISLQDNPYDGVVHNTTYGAMFTIALRRYGQLCIGLYRLHDQDNPDSMKRYVITNPPAELRIKNTDYVYVLEQFDPGLEYEPGKRHF.

Topologically, residues 1-44 (MGEIYSPSQSKGFNQPYGYPMNCNLSRVFMEMTEEDRKCLEERK) are extracellular. A helical transmembrane segment spans residues 45 to 65 (YWCFLLSSITTFCASMILVVI). Residues 66–139 (WRVVTHLCCQ…LISGQSLTGR (74 aa)) lie on the Cytoplasmic side of the membrane. Residues 140-161 (FLVLLVFILSIGSLIIYFYDAS) form a helical membrane-spanning segment. At 162 to 178 (FQNFQVETCIPWQDSPS) the chain is on the extracellular side. A helical transmembrane segment spans residues 179 to 199 (QQIDLGFNIFFLVYFFIRFIA). Residues 200 to 203 (ASDK) are Cytoplasmic-facing. A helical membrane pass occupies residues 204 to 224 (VWFLLEMYSWIDFFTIPPSFV). Topologically, residues 225–228 (AIYL) are extracellular. A helical; Voltage-sensor transmembrane segment spans residues 229–249 (QRNWLGFRFLRALRLMTVPDI). The Cytoplasmic segment spans residues 250 to 264 (LQYLNILKTSSSIRL). The helical transmembrane segment at 265-285 (TQLVTIFVAVCLTGAGLVHLL) threads the bilayer. At 286-299 (ENSGDFFKGFINPH) the chain is on the extracellular side. Residues 300–322 (RITYADSVYFVLVTMSTVGYGDI) constitute an intramembrane region (pore-forming). The Selectivity for potassium motif lies at 316 to 319 (TVGY). Over 323–331 (YCTTLCGRL) the chain is Extracellular. A helical membrane pass occupies residues 332–352 (FMIFFILFGLAMFASYVPEIA). The Cytoplasmic segment spans residues 353-1140 (DLIGNRQKYG…LEYEPGKRHF (788 aa)). Positions 371–514 (KKHIVVCGHI…DWKRGDDVIC (144 aa)) constitute an RCK N-terminal 1 domain. Residues 520 to 540 (LGFIAQSCLAPGFSTMMANLF) are segment S7. Positions 578-598 (MTFPEAVDLLFNRLGLLLLAI) are segment S8. The interval 797-817 (VLNGHVVVCLFADQDSPLIGL) is segment S9. The RCK N-terminal 2 domain occupies 799 to 953 (NGHVVVCLFA…GAKFGTNVPM (155 aa)). A Calcium bowl motif is present at residues 955-977 (TELVNDSNVQFLDQDDDDDPDTE). Q964, D967, D970, and D972 together coordinate Ca(2+). Positions 984 to 1004 (FACGTAFAISVLDSLMSTTYF) are segment S10.

Belongs to the potassium channel family. Calcium-activated (TC 1.A.1.3) subfamily. Slo sub-subfamily. Homotetramer; which constitutes the calcium-activated potassium channel. Post-translationally, phosphorylated. In terms of tissue distribution, expressed in synaptic regions of the nervous system including in both the nerve ring and nerve cords, as well as in the body-wall and vulval muscle. Expressed broadly in motor neurons. Forms puncta at presynaptic terminals of neurons, muscle excitation sites, and in the dorsal nerve cord.

It is found in the cell membrane. The protein resides in the synapse. Potassium channel activated by both membrane depolarization or increase in cytosolic Ca(2+) that mediates export of K(+). Its activation dampens the excitatory events that elevate the cytosolic Ca(2+) concentration and/or depolarize the cell membrane. It therefore contributes to repolarization of the membrane potential. Essential for the regulation of neurotransmitter release at synapses. Regulates longevity and age-associated decline in motor activity in mid-late life, by acting in motor neurons and through daf-16 in the intestine. When clustered in neurons, mediates ethanol-induced suppression of locomotory and egg-laying behaviors. This Caenorhabditis elegans protein is Calcium-activated potassium channel slo-1.